The primary structure comprises 610 residues: MENKRNFFITIALSILILALWQVFYLGPKTEAQREQARIEEQQRQAQQAAQNRQASSSTGDTPQMPANPDSIPGQGDTKAAGAPLTRDAAIAQSPRIEIDTPSLRGSINLTGARLDDLYLKKYHETVSDKSPEIELLAPSSLKQGYFVELGFTGNDATGAVPGPNTVWVVEGNNKLTPSTPVTLTYTNDKNLTFKRVISVDDAYMFTVDDTIINNGGSTVSLASYGRVTRFNQPEHASATYVLHEGLIGVMGQDGLQEIKYAKIKDNKDISFKDVIGGWVGITDKYWAATLIPPQDEKFTGRFSHFTNDRPRYQSDLLSAPLTVAPGQSQKIQNRVFAGAKVVNTIQNYETKYHIKQFDLLIDWGWFYFITKPMFYLIDWIYKFTGNFGVAILVVTVLLKALFFPLANKSYKSMARMKLMQPKMTEIREKYADDKMKQQQAMMELYKREKINPLAGCWPVLVQIPVFFALYKVLYVTIEMRHAPFFGWIQDLAAPDPTSIFNLFGLLPYTVPHFLMIGVWPIIMGITMFLQMRMNPTPPDPTQAAIFTWMPIIFTFMLASFPAGLVIYWAWNNTLSIIQQSVIMKRQGVKIELFDNLKGLFRRKPKEANK.

A helical membrane pass occupies residues 7–27; it reads FFITIALSILILALWQVFYLG. Residues 36-82 form a disordered region; the sequence is QARIEEQQRQAQQAAQNRQASSSTGDTPQMPANPDSIPGQGDTKAAG. Residues 44–55 are compositionally biased toward low complexity; that stretch reads RQAQQAAQNRQA. 5 helical membrane-spanning segments follow: residues 358–378, 387–407, 458–478, 510–530, and 546–566; these read FDLLIDWGWFYFITKPMFYLI, NFGVAILVVTVLLKALFFPLA, WPVLVQIPVFFALYKVLYVTI, TVPHFLMIGVWPIIMGITMFL, and IFTWMPIIFTFMLASFPAGLV.

This sequence belongs to the OXA1/ALB3/YidC family. Type 1 subfamily. As to quaternary structure, interacts with the Sec translocase complex via SecD. Specifically interacts with transmembrane segments of nascent integral membrane proteins during membrane integration.

It localises to the cell inner membrane. Required for the insertion and/or proper folding and/or complex formation of integral membrane proteins into the membrane. Involved in integration of membrane proteins that insert both dependently and independently of the Sec translocase complex, as well as at least some lipoproteins. Aids folding of multispanning membrane proteins. The sequence is that of Membrane protein insertase YidC from Brucella suis biovar 1 (strain 1330).